A 117-amino-acid chain; its full sequence is DNA-binding protein RdgB (117 aa).

The segment at residues 82 to 102 (NHSALAKKYNVSLQWIYKIVR) is a DNA-binding region (H-T-H motif).

It belongs to the c/mor transcriptional regulatory family.

Regulates pectin lyase production in response to DNA damage. The sequence is that of DNA-binding protein RdgB (rdgB) from Pectobacterium carotovorum subsp. carotovorum (Erwinia carotovora subsp. carotovora).